A 490-amino-acid polypeptide reads, in one-letter code: Aspartyl/glutamyl-tRNA(Asn/Gln) amidotransferase subunit B (490 aa).

The protein belongs to the GatB/GatE family. GatB subfamily. As to quaternary structure, heterotrimer of A, B and C subunits.

It catalyses the reaction L-glutamyl-tRNA(Gln) + L-glutamine + ATP + H2O = L-glutaminyl-tRNA(Gln) + L-glutamate + ADP + phosphate + H(+). The enzyme catalyses L-aspartyl-tRNA(Asn) + L-glutamine + ATP + H2O = L-asparaginyl-tRNA(Asn) + L-glutamate + ADP + phosphate + 2 H(+). Its function is as follows. Allows the formation of correctly charged Asn-tRNA(Asn) or Gln-tRNA(Gln) through the transamidation of misacylated Asp-tRNA(Asn) or Glu-tRNA(Gln) in organisms which lack either or both of asparaginyl-tRNA or glutaminyl-tRNA synthetases. The reaction takes place in the presence of glutamine and ATP through an activated phospho-Asp-tRNA(Asn) or phospho-Glu-tRNA(Gln). The chain is Aspartyl/glutamyl-tRNA(Asn/Gln) amidotransferase subunit B from Zymomonas mobilis subsp. mobilis (strain ATCC 31821 / ZM4 / CP4).